The following is a 356-amino-acid chain: MEIPAVTEPSYNTVAKNDFMSGFLCFSINVRAFGITVLTPLYSLVFIIGVIGHVLVVLVLIQHKRLRNMTSIYLFNLAISDLVFLSTLPFWVDYIMKGDWIFGNAMCKFVSGFYYLGLYSDMFFITLLTIDRYLAVVHVVFALRARTVTFGIISSIITWVLAALVSIPCLYVFKSQMEFTYHTCRAILPRKSLIRFLRFQALTMNILGLILPLLAMIICYTRIINVLHRRPNKKKAKVMRLIFVITLLFFLLLAPYYLAAFVSAFEDVLFTPSCLRSQQVDLSLMITEALAYTHCCVNPVIYVFVGKRFRKYLWQLFRRHTAITLPQWLPFLSVDRAQRASATPPSTVEIETSADL.

Residues 1 to 32 (MEIPAVTEPSYNTVAKNDFMSGFLCFSINVRA) lie on the Extracellular side of the membrane. The chain crosses the membrane as a helical span at residues 33–60 (FGITVLTPLYSLVFIIGVIGHVLVVLVL). At 61-67 (IQHKRLR) the chain is on the cytoplasmic side. Residues 68–92 (NMTSIYLFNLAISDLVFLSTLPFWV) form a helical membrane-spanning segment. The Extracellular segment spans residues 93-108 (DYIMKGDWIFGNAMCK). C107 and C184 are joined by a disulfide. A helical transmembrane segment spans residues 109–130 (FVSGFYYLGLYSDMFFITLLTI). Topologically, residues 131–147 (DRYLAVVHVVFALRART) are cytoplasmic. Residues 148–172 (VTFGIISSIITWVLAALVSIPCLYV) form a helical membrane-spanning segment. Residues 173–198 (FKSQMEFTYHTCRAILPRKSLIRFLR) are Extracellular-facing. The chain crosses the membrane as a helical span at residues 199-224 (FQALTMNILGLILPLLAMIICYTRII). At 225 to 240 (NVLHRRPNKKKAKVMR) the chain is on the cytoplasmic side. Residues 241 to 265 (LIFVITLLFFLLLAPYYLAAFVSAF) traverse the membrane as a helical segment. Over 266-282 (EDVLFTPSCLRSQQVDL) the chain is Extracellular. Residues 283–306 (SLMITEALAYTHCCVNPVIYVFVG) form a helical membrane-spanning segment. The Cytoplasmic portion of the chain corresponds to 307–356 (KRFRKYLWQLFRRHTAITLPQWLPFLSVDRAQRASATPPSTVEIETSADL).

The protein belongs to the G-protein coupled receptor 1 family. As to expression, detected in the spleen, liver and leukocytes.

The protein localises to the cell membrane. Its function is as follows. Probable receptor for a C-C type chemokine. The protein is C-C chemokine receptor 1-like protein 1 (Ccr1l1) of Mus musculus (Mouse).